The following is a 445-amino-acid chain: Argininosuccinate synthase (445 aa).

ATP is bound by residues 17 to 25 (AFSGGLDTS) and A43. Y99 provides a ligand contact to L-citrulline. ATP contacts are provided by G129 and T131. 3 residues coordinate L-aspartate: T131, N135, and D136. Residue N135 participates in L-citrulline binding. An ATP-binding site is contributed by D136. The L-citrulline site is built by R139 and S192. D194 is an ATP binding site. The L-citrulline site is built by T201, E203, and E280.

Belongs to the argininosuccinate synthase family. Type 2 subfamily. Homotetramer.

The protein resides in the cytoplasm. It carries out the reaction L-citrulline + L-aspartate + ATP = 2-(N(omega)-L-arginino)succinate + AMP + diphosphate + H(+). It functions in the pathway amino-acid biosynthesis; L-arginine biosynthesis; L-arginine from L-ornithine and carbamoyl phosphate: step 2/3. In Bordetella pertussis (strain Tohama I / ATCC BAA-589 / NCTC 13251), this protein is Argininosuccinate synthase.